Here is a 208-residue protein sequence, read N- to C-terminus: Small ribosomal subunit protein eS8 (208 aa).

Residues Met-1–Pro-40 form a disordered region. Positions Trp-8–Lys-26 are enriched in basic residues.

This sequence belongs to the eukaryotic ribosomal protein eS8 family. Component of the small ribosomal subunit.

Its subcellular location is the cytoplasm. Component of the small ribosomal subunit. The ribosome is a large ribonucleoprotein complex responsible for the synthesis of proteins in the cell. The polypeptide is Small ribosomal subunit protein eS8 (rps8) (Ictalurus punctatus (Channel catfish)).